A 5068-amino-acid polypeptide reads, in one-letter code: Protein piccolo (5068 aa).

Low complexity predominate over residues 1 to 20 (MGNEASLEGEGLPEGLAAAA). Disordered regions lie at residues 1–143 (MGNE…DFKE) and 173–524 (FDLI…QAPA). Residues 93–102 (PGKPPDPGRP) are compositionally biased toward pro residues. Composition is skewed to basic and acidic residues over residues 111–122 (RTTDTFRSEQKL), 133–143 (KESKSRTDFKE), and 185–199 (ETTK…DQGK). Ser212 bears the Phosphoserine mark. Residues 232–241 (PSKSVSSQQA) are compositionally biased toward polar residues. Residues 252–279 (AKPSQQSPAQTPAQQAKPVAQQPGPAKA) show a composition bias toward low complexity. The span at 319-334 (TSLQQPGPKSLAQTPG) shows a compositional bias: polar residues. 2 stretches are compositionally biased toward pro residues: residues 391–407 (PTKP…PQPQ) and 416–487 (PQQP…PQPQ). A 10 X 10 AA tandem approximate repeats of P-A-K-P-Q-P-Q-Q-P-X region spans residues 401–500 (PAKPQPQQPV…LGKPSAQQPS (100 aa)). The span at 495–508 (SAQQPSKSISQTVT) shows a compositional bias: polar residues. The span at 515–524 (PPTSAAQAPA) shows a compositional bias: low complexity. The C4-type zinc-finger motif lies at 532–556 (CPLCNTTELLLHTPEKANFNTCTEC). Disordered regions lie at residues 594–867 (AAIP…TVTG), 883–1005 (LIST…TELN), 1057–1345 (LGDM…PSDL), and 1364–1803 (VGEK…SDPE). A compositionally biased stretch (polar residues) spans 610–625 (QPATASKSPVPSQQAS). Over residues 626–644 (PKKELPSKQDSPKAPESKK) the composition is skewed to basic and acidic residues. Residues 709 to 738 (SPSSAAATSKPAILSSQVQAQAQVTTAPPL) are compositionally biased toward low complexity. Residues 782–795 (ESKDPVQKKEEPKK) show a composition bias toward basic and acidic residues. Over residues 809 to 830 (VPKGSPTPSGTRPTTGQATPQS) the composition is skewed to low complexity. Phosphoserine is present on residues Ser844 and Ser856. 2 stretches are compositionally biased toward polar residues: residues 856–865 (SQPTTPQETV) and 883–893 (LISTAGQQAPH). Residue Thr860 is modified to Phosphothreonine. The C4-type zinc finger occupies 997 to 1020 (CPLCRTELNVGSQDPPNFNTCTEC). Residues 1073 to 1085 (SPVPAPAEPPPQK) show a composition bias toward pro residues. The segment covering 1097 to 1116 (KETEVKAETEKQIPEKETPS) has biased composition (basic and acidic residues). Residue Thr1120 is modified to Phosphothreonine. 4 stretches are compositionally biased toward basic and acidic residues: residues 1144 to 1165 (PEKK…KKPP), 1172 to 1186 (LEEK…KLPP), 1244 to 1253 (PKDRQKESRD), and 1262 to 1283 (TAKE…DKSD). Residues 1290–1306 (PKSPQGLSDTGYSSDGI) are compositionally biased toward polar residues. Phosphoserine occurs at positions 1292, 1302, 1303, 1332, 1334, 1337, 1338, and 1341. Residues 1319-1333 (SDEKDLLKGLKKDSF) show a composition bias toward basic and acidic residues. The span at 1334-1343 (SQESSPSSPS) shows a compositional bias: low complexity. Polar residues predominate over residues 1374–1392 (PQKVSPEQPQDQQKTQTPS). Residues 1405–1444 (KESQEKKVTSKKDSAQGFPSRKEHKENPELVDDLSPRRAS) show a composition bias toward basic and acidic residues. Phosphoserine occurs at positions 1439, 1451, 1452, 1454, 1457, 1481, 1484, 1505, and 1507. Over residues 1499 to 1511 (SADEDASGSEDEE) the composition is skewed to acidic residues. Position 1552 is a phosphothreonine (Thr1552). A phosphoserine mark is found at Ser1553, Ser1563, and Ser1575. The segment covering 1566–1575 (DEDDETFDES) has biased composition (acidic residues). Basic and acidic residues predominate over residues 1576–1587 (PELKFRETKSQE). Polar residues predominate over residues 1606–1624 (ELNSTVTDKYSAESSQKKT). The span at 1628–1638 (FDEEPELEMES) shows a compositional bias: acidic residues. Phosphoserine is present on Ser1638. Residue Thr1640 is modified to Phosphothreonine. 2 positions are modified to phosphoserine: Ser1642 and Ser1647. Residues 1650 to 1667 (EGSSSLHASSFTPGTSPT) are compositionally biased toward polar residues. Over residues 1707–1720 (DSSEEEELREEEEL) the composition is skewed to acidic residues. Residues Ser1708 and Ser1709 each carry the phosphoserine modification. Basic and acidic residues predominate over residues 1721–1734 (LKEQEKQRELEQQQ). Thr1760 carries the post-translational modification Phosphothreonine. At Ser1766 the chain carries Phosphoserine. The segment covering 1775-1790 (EELRQAAEMEELHRSS) has biased composition (basic and acidic residues). Ser1795, Ser1800, Ser1808, and Ser1829 each carry phosphoserine. Disordered regions lie at residues 2104–2126 (PSES…ISSV) and 2261–2377 (EAEL…AAAA). Residues 2109–2126 (TSVPPSDTPSLTSSISSV) show a composition bias toward low complexity. The span at 2277–2291 (TPSSQTKEQPGSPHS) shows a compositional bias: polar residues. Over residues 2334–2368 (QPPPPPPPPPPPPPPPPPPPPPPLPPATSPKPPTY) the composition is skewed to pro residues. Position 2495 is a phosphoserine (Ser2495). The O-linked (GlcNAc) threonine glycan is linked to Thr2686. A glycan (O-linked (GlcNAc) serine) is linked at Ser2960. Phosphothreonine is present on Thr2998. 2 disordered regions span residues 3334–3443 (KEEK…SKVS) and 3490–3556 (KGGS…LYSP). Ser3358 carries the post-translational modification Phosphoserine. Positions 3361 to 3370 (DDPRNLKKIV) are enriched in basic and acidic residues. Phosphoserine is present on Ser3372. A phosphothreonine mark is found at Thr3376 and Thr3403. Residues 3403–3412 (TDDEDQDEWD) show a composition bias toward acidic residues. The span at 3495-3507 (GCQTETDPDTQSP) shows a compositional bias: polar residues. A phosphoserine mark is found at Ser3506, Ser3514, Ser3545, Ser3549, Ser3555, Ser3558, Ser3561, Ser3582, Ser3608, Ser3610, and Ser3616. Disordered regions lie at residues 3576–3679 (PLPD…RRRM) and 3760–3797 (DYMS…QFIP). Composition is skewed to polar residues over residues 3636 to 3645 (KGSQTTSGTQ) and 3661 to 3673 (STGT…TMGT). At Ser3763 the chain carries Phosphoserine. The segment covering 3773 to 3785 (SRVESQHGIERPR) has biased composition (basic and acidic residues). Over residues 3787-3797 (APQTEFSQFIP) the composition is skewed to polar residues. Residues Ser4016, Ser4042, and Ser4132 each carry the phosphoserine modification. 2 disordered regions span residues 4207-4231 (ADKP…GLDL) and 4254-4273 (VSFG…LPIS). Low complexity predominate over residues 4210 to 4231 (PYSSGSRSRPSSRPSSVYGLDL). Polar residues predominate over residues 4257 to 4273 (GHSSSSARTKPTSLPIS). 5 positions are modified to phosphoserine: Ser4286, Ser4290, Ser4293, Ser4322, and Ser4358. Positions 4317-4339 (RDQFGSSHSLPEVQQHMREESRT) are disordered. The region spanning 4424 to 4518 (RIKITRDSKD…EAEICVRLDL (95 aa)) is the PDZ domain. The interval 4574–4620 (KGAHAHSGPTSAGSSSVPSPGQPGSPSVSKKKHGGSKPTDVSKTASH) is disordered. The segment covering 4578–4601 (AHSGPTSAGSSSVPSPGQPGSPSV) has biased composition (low complexity). A Phosphoserine modification is found at Ser4592. Residues 4622–4751 (ITGEIQLQIN…SHLDNTPRWY (130 aa)) form the C2 1 domain. Ca(2+)-binding residues include Asp4651 and Asp4657. Residue Ser4706 is modified to Phosphoserine. Ca(2+)-binding residues include Asp4721, Asp4723, Ser4726, and Asp4729. 2 disordered regions span residues 4758–4834 (ESIE…SVAQ) and 4857–4891 (QPTK…SEGS). Low complexity-rich tracts occupy residues 4766-4778 (HSSQ…PKPS) and 4805-4815 (SSPGSSKSSSE). The span at 4823 to 4834 (PSRSQSKTSVAQ) shows a compositional bias: polar residues. Positions 4870–4891 (SVSTGSSGSSVGSGYSVDSEGS) are enriched in low complexity. Residues 4933 to 5058 (VMGEIKLALK…DLRKRIVNWH (126 aa)) form the C2 2 domain.

Interacts with BSN, ERC2/CAST1, RIMS1 and UNC13A. Interacts (via C-terminus) with TRIO (via N-terminus). Interacts with CTBP1. Interacts with SIAH1; this interaction negatively regulates SIAH1 E3 ligase activity. Directly interacts with GIT1 and GIT2. Requires Ca(2+) as cofactor. As to expression, highly expressed in brain. Moderately expressed in pituitary gland and pancreatic islets. Low levels found in stomach.

It localises to the presynaptic active zone. Scaffold protein of the presynaptic cytomatrix at the active zone (CAZ) which is the place in the synapse where neurotransmitter is released. After synthesis, participates in the formation of Golgi-derived membranous organelles termed Piccolo-Bassoon transport vesicles (PTVs) that are transported along axons to sites of nascent synaptic contacts. At the presynaptic active zone, regulates the spatial organization of synaptic vesicle cluster, the protein complexes that execute membrane fusion and compensatory endocytosis. Organizes as well the readily releasable pool of synaptic vesicles and safeguards a fraction of them to be not immediately available for action potential-induced release. Also functions in processes other than assembly such as the regulation of specific presynaptic protein ubiquitination by interacting with SIAH1 or the regulation of presynaptic autophagy. Also mediates synapse to nucleus communication leading to reconfiguration of gene expression by associating with the transcriptional corepressor CTBP1 and by subsequently reducing the size of its pool available for nuclear import. The chain is Protein piccolo from Mus musculus (Mouse).